Reading from the N-terminus, the 102-residue chain is uncharacterized protein (102 aa).

The helical transmembrane segment at 27–47 threads the bilayer; the sequence is TISLVSAGLLEEIFLLFGLTF.

The protein resides in the membrane. This is an uncharacterized protein from Saccharomyces cerevisiae (strain ATCC 204508 / S288c) (Baker's yeast).